The following is a 393-amino-acid chain: Probable acetyl-CoA acyltransferase (393 aa).

Cys-88 (acyl-thioester intermediate) is an active-site residue. Residues His-349 and Cys-378 each act as proton acceptor in the active site.

Belongs to the thiolase-like superfamily. Thiolase family.

It is found in the cytoplasm. It carries out the reaction 2 acetyl-CoA = acetoacetyl-CoA + CoA. The sequence is that of Probable acetyl-CoA acyltransferase from Staphylococcus aureus (strain MSSA476).